The following is a 456-amino-acid chain: Argininosuccinate lyase (456 aa).

The protein belongs to the lyase 1 family. Argininosuccinate lyase subfamily.

The protein resides in the cytoplasm. It catalyses the reaction 2-(N(omega)-L-arginino)succinate = fumarate + L-arginine. The protein operates within amino-acid biosynthesis; L-arginine biosynthesis; L-arginine from L-ornithine and carbamoyl phosphate: step 3/3. This is Argininosuccinate lyase from Carboxydothermus hydrogenoformans (strain ATCC BAA-161 / DSM 6008 / Z-2901).